Reading from the N-terminus, the 206-residue chain is Ribosomal RNA small subunit methyltransferase G (206 aa).

S-adenosyl-L-methionine contacts are provided by residues glycine 74, leucine 79, valine 125 to glutamate 126, and arginine 140.

The protein belongs to the methyltransferase superfamily. RNA methyltransferase RsmG family.

The protein resides in the cytoplasm. The catalysed reaction is guanosine(527) in 16S rRNA + S-adenosyl-L-methionine = N(7)-methylguanosine(527) in 16S rRNA + S-adenosyl-L-homocysteine. Its function is as follows. Specifically methylates the N7 position of guanine in position 527 of 16S rRNA. This is Ribosomal RNA small subunit methyltransferase G from Shewanella sp. (strain ANA-3).